Reading from the N-terminus, the 156-residue chain is Small ribosomal subunit protein uS7 (156 aa).

The protein belongs to the universal ribosomal protein uS7 family. As to quaternary structure, part of the 30S ribosomal subunit. Contacts proteins S9 and S11.

In terms of biological role, one of the primary rRNA binding proteins, it binds directly to 16S rRNA where it nucleates assembly of the head domain of the 30S subunit. Is located at the subunit interface close to the decoding center, probably blocks exit of the E-site tRNA. The polypeptide is Small ribosomal subunit protein uS7 (Vibrio vulnificus (strain CMCP6)).